We begin with the raw amino-acid sequence, 210 residues long: Na(+)-translocating NADH-quinone reductase subunit D (210 aa).

5 helical membrane-spanning segments follow: residues 42–62 (FVMT…VSLI), 72–92 (IIVQ…ILKA), 103–123 (VFVG…AFAM), 131–151 (LIDG…VGFF), and 178–198 (NGLM…IWAI).

Belongs to the NqrDE/RnfAE family. Composed of six subunits; NqrA, NqrB, NqrC, NqrD, NqrE and NqrF.

The protein localises to the cell inner membrane. It carries out the reaction a ubiquinone + n Na(+)(in) + NADH + H(+) = a ubiquinol + n Na(+)(out) + NAD(+). NQR complex catalyzes the reduction of ubiquinone-1 to ubiquinol by two successive reactions, coupled with the transport of Na(+) ions from the cytoplasm to the periplasm. NqrA to NqrE are probably involved in the second step, the conversion of ubisemiquinone to ubiquinol. This Vibrio vulnificus (strain CMCP6) protein is Na(+)-translocating NADH-quinone reductase subunit D.